A 644-amino-acid chain; its full sequence is ATP-dependent zinc metalloprotease FtsH (644 aa).

The Cytoplasmic portion of the chain corresponds to 1–13 (MANNDNKHRRSMS). Residues 14-34 (MLLYIAVAIFVYLLLSNTLLP) form a helical membrane-spanning segment. The Extracellular segment spans residues 35 to 117 (GLLRQQIQTV…SIPDNSANML (83 aa)). The helical transmembrane segment at 118–138 (MYALIQYGIPLIIFLGIGFFI) threads the bilayer. The Cytoplasmic segment spans residues 139 to 644 (NRSLKRAMGD…DEGSSTPSEE (506 aa)). 224 to 231 (GPPGTGKT) is an ATP binding site. His445 contributes to the Zn(2+) binding site. Glu446 is an active-site residue. Zn(2+) contacts are provided by His449 and Asp522.

In the central section; belongs to the AAA ATPase family. The protein in the C-terminal section; belongs to the peptidase M41 family. Homohexamer. Zn(2+) serves as cofactor.

The protein resides in the cell membrane. Functionally, acts as a processive, ATP-dependent zinc metallopeptidase for both cytoplasmic and membrane proteins. Plays a role in the quality control of integral membrane proteins. In Lancefieldella parvula (strain ATCC 33793 / DSM 20469 / CCUG 32760 / JCM 10300 / KCTC 3663 / VPI 0546 / 1246) (Atopobium parvulum), this protein is ATP-dependent zinc metalloprotease FtsH.